Reading from the N-terminus, the 467-residue chain is Cysteine--tRNA ligase (467 aa).

Zn(2+) is bound at residue cysteine 30. Residues 32 to 42 carry the 'HIGH' region motif; the sequence is PTVYNYIHIGN. Cysteine 210, histidine 235, and glutamate 239 together coordinate Zn(2+). The 'KMSKS' region signature appears at 267–271; sequence KMSKS. Lysine 270 lines the ATP pocket. At serine 271 the chain carries Phosphoserine.

It belongs to the class-I aminoacyl-tRNA synthetase family. Monomer. It depends on Zn(2+) as a cofactor.

The protein localises to the cytoplasm. The catalysed reaction is tRNA(Cys) + L-cysteine + ATP = L-cysteinyl-tRNA(Cys) + AMP + diphosphate. This is Cysteine--tRNA ligase from Geobacillus thermodenitrificans (strain NG80-2).